The chain runs to 370 residues: Peptide chain release factor 1 (370 aa).

At Q231 the chain carries N5-methylglutamine. Residues 284–293 are compositionally biased toward basic and acidic residues; it reads AREERERETR. The segment at 284 to 303 is disordered; that stretch reads AREERERETRAAQVGTGERS.

The protein belongs to the prokaryotic/mitochondrial release factor family. Methylated by PrmC. Methylation increases the termination efficiency of RF1.

Its subcellular location is the cytoplasm. In terms of biological role, peptide chain release factor 1 directs the termination of translation in response to the peptide chain termination codons UAG and UAA. This Deinococcus geothermalis (strain DSM 11300 / CIP 105573 / AG-3a) protein is Peptide chain release factor 1.